The following is a 249-amino-acid chain: Benzil reductase ((S)-benzoin forming) (249 aa).

The NADP(+) site is built by isoleucine 6, asparagine 87, tyrosine 154, lysine 158, valine 189, and threonine 191. The active-site Proton acceptor is tyrosine 154.

This sequence belongs to the short-chain dehydrogenases/reductases (SDR) family.

Its subcellular location is the cytoplasm. It carries out the reaction (S)-benzoin + NADP(+) = benzil + NADPH + H(+). The catalysed reaction is 2-hydroxy-1-phenyl-1-propanone + NADP(+) = 1-phenyl-1,2-propanedione + NADPH + H(+). With respect to regulation, inhibited by Cibacron blue 3GA, a general SDR family inhibitor. Functionally, reduces benzil stereospecifically to (S)-benzoin. Can also reduce 1-phenyl-1,2-propanedione, 1,4-naphthoquinone, 1-(4-methyl-phenyl)-2-phenyl-ethane-1,2-dione, 1-(4-fluoro-phenyl)-2-phenyl-ethane-1,2-dione, methyl benzoylformate and p-nitrobenzaldehyde in decreasing order. This chain is Benzil reductase ((S)-benzoin forming), found in Bacillus cereus.